We begin with the raw amino-acid sequence, 113 residues long: Protein translation factor SUI1 homolog 2 (113 aa).

Serine 2 carries the N-acetylserine modification.

Belongs to the SUI1 family.

Functionally, probably involved in translation. The sequence is that of Protein translation factor SUI1 homolog 2 from Arabidopsis thaliana (Mouse-ear cress).